We begin with the raw amino-acid sequence, 392 residues long: Putative nickel insertion protein (392 aa).

This sequence belongs to the LarC family.

This is Putative nickel insertion protein from Pelobacter propionicus (strain DSM 2379 / NBRC 103807 / OttBd1).